The sequence spans 107 residues: Ubiquitin-related modifier 1 (107 aa).

Glycine 107 is subject to 1-thioglycine. Glycine 107 is covalently cross-linked (Glycyl lysine isopeptide (Gly-Lys) (interchain with K-? in acceptor proteins)).

It belongs to the URM1 family. C-terminal thiocarboxylation occurs in 2 steps, it is first acyl-adenylated (-COAMP) via the hesA/moeB/thiF part of UBA4, then thiocarboxylated (-COSH) via the rhodanese domain of UBA4.

Its subcellular location is the cytoplasm. It participates in tRNA modification; 5-methoxycarbonylmethyl-2-thiouridine-tRNA biosynthesis. In terms of biological role, acts as a sulfur carrier required for 2-thiolation of mcm(5)S(2)U at tRNA wobble positions of cytosolic tRNA(Lys), tRNA(Glu) and tRNA(Gln). Serves as sulfur donor in tRNA 2-thiolation reaction by being thiocarboxylated (-COSH) at its C-terminus by the MOCS3 homolog UBA4. The sulfur is then transferred to tRNA to form 2-thiolation of mcm(5)S(2)U. Prior mcm(5) tRNA modification by the elongator complex is required for 2-thiolation. Also acts as a ubiquitin-like protein (UBL) that is covalently conjugated via an isopeptide bond to lysine residues of target proteins such as AHP1. The thiocarboxylated form serves as substrate for conjugation and oxidative stress specifically induces the formation of UBL-protein conjugates. This chain is Ubiquitin-related modifier 1, found in Mycosarcoma maydis (Corn smut fungus).